We begin with the raw amino-acid sequence, 383 residues long: uncharacterized protein (383 aa).

The YcaO domain occupies 58-383; that stretch reads GKGATRTQAR…RVGRRIRSSI (326 aa). A disordered region spans residues 80-100; the sequence is AERKPEDETFTAHPEDCDGLD.

This is an uncharacterized protein from Methanothermobacter thermautotrophicus (strain ATCC 29096 / DSM 1053 / JCM 10044 / NBRC 100330 / Delta H) (Methanobacterium thermoautotrophicum).